Here is a 579-residue protein sequence, read N- to C-terminus: Arginine--tRNA ligase (579 aa).

A 'HIGH' region motif is present at residues 127-137 (ANPTGPLHVGH).

The protein belongs to the class-I aminoacyl-tRNA synthetase family. As to quaternary structure, monomer.

Its subcellular location is the cytoplasm. It carries out the reaction tRNA(Arg) + L-arginine + ATP = L-arginyl-tRNA(Arg) + AMP + diphosphate. This chain is Arginine--tRNA ligase, found in Acidithiobacillus ferrooxidans (strain ATCC 23270 / DSM 14882 / CIP 104768 / NCIMB 8455) (Ferrobacillus ferrooxidans (strain ATCC 23270)).